The sequence spans 263 residues: Tryptophan synthase alpha chain (263 aa).

Catalysis depends on proton acceptor residues Glu-49 and Asp-60.

The protein belongs to the TrpA family. As to quaternary structure, tetramer of two alpha and two beta chains.

The enzyme catalyses (1S,2R)-1-C-(indol-3-yl)glycerol 3-phosphate + L-serine = D-glyceraldehyde 3-phosphate + L-tryptophan + H2O. It functions in the pathway amino-acid biosynthesis; L-tryptophan biosynthesis; L-tryptophan from chorismate: step 5/5. Functionally, the alpha subunit is responsible for the aldol cleavage of indoleglycerol phosphate to indole and glyceraldehyde 3-phosphate. The polypeptide is Tryptophan synthase alpha chain (Jannaschia sp. (strain CCS1)).